Consider the following 310-residue polypeptide: N-acetyl-gamma-glutamyl-phosphate reductase (310 aa).

Cys-117 is a catalytic residue.

Belongs to the NAGSA dehydrogenase family. Type 2 subfamily.

Its subcellular location is the cytoplasm. It catalyses the reaction N-acetyl-L-glutamate 5-semialdehyde + phosphate + NADP(+) = N-acetyl-L-glutamyl 5-phosphate + NADPH + H(+). It participates in amino-acid biosynthesis; L-arginine biosynthesis; N(2)-acetyl-L-ornithine from L-glutamate: step 3/4. Functionally, catalyzes the NADPH-dependent reduction of N-acetyl-5-glutamyl phosphate to yield N-acetyl-L-glutamate 5-semialdehyde. The sequence is that of N-acetyl-gamma-glutamyl-phosphate reductase from Allorhizobium ampelinum (strain ATCC BAA-846 / DSM 112012 / S4) (Agrobacterium vitis (strain S4)).